The following is a 308-amino-acid chain: Cytochrome b (308 aa).

Transmembrane regions (helical) follow at residues 1–21 (SGSL…FLAA), 45–66 (WLIR…YLHI), 81–101 (WNIG…GYVL), and 146–166 (FFAL…VHLT). Residues H51 and H65 each contribute to the heme b site. Heme b is bound by residues H150 and H164. Residue H169 participates in a ubiquinone binding. The next 3 helical transmembrane spans lie at 194-214 (TKDV…ALFS), 256-276 (LGGV…PLLH), and 288-308 (LSQI…WVGS).

This sequence belongs to the cytochrome b family. The cytochrome bc1 complex contains 11 subunits: 3 respiratory subunits (MT-CYB, CYC1 and UQCRFS1), 2 core proteins (UQCRC1 and UQCRC2) and 6 low-molecular weight proteins (UQCRH/QCR6, UQCRB/QCR7, UQCRQ/QCR8, UQCR10/QCR9, UQCR11/QCR10 and a cleavage product of UQCRFS1). This cytochrome bc1 complex then forms a dimer. It depends on heme b as a cofactor.

The protein localises to the mitochondrion inner membrane. Its function is as follows. Component of the ubiquinol-cytochrome c reductase complex (complex III or cytochrome b-c1 complex) that is part of the mitochondrial respiratory chain. The b-c1 complex mediates electron transfer from ubiquinol to cytochrome c. Contributes to the generation of a proton gradient across the mitochondrial membrane that is then used for ATP synthesis. The polypeptide is Cytochrome b (MT-CYB) (Garritornis isidorei (Papuan babbler)).